The primary structure comprises 245 residues: 1-(5-phosphoribosyl)-5-[(5-phosphoribosylamino)methylideneamino] imidazole-4-carboxamide isomerase 1 (245 aa).

The Proton acceptor role is filled by Asp7. The Proton donor role is filled by Asp129.

This sequence belongs to the HisA/HisF family.

The protein localises to the cytoplasm. The enzyme catalyses 1-(5-phospho-beta-D-ribosyl)-5-[(5-phospho-beta-D-ribosylamino)methylideneamino]imidazole-4-carboxamide = 5-[(5-phospho-1-deoxy-D-ribulos-1-ylimino)methylamino]-1-(5-phospho-beta-D-ribosyl)imidazole-4-carboxamide. It functions in the pathway amino-acid biosynthesis; L-histidine biosynthesis; L-histidine from 5-phospho-alpha-D-ribose 1-diphosphate: step 4/9. This is 1-(5-phosphoribosyl)-5-[(5-phosphoribosylamino)methylideneamino] imidazole-4-carboxamide isomerase 1 (hisA1) from Photorhabdus laumondii subsp. laumondii (strain DSM 15139 / CIP 105565 / TT01) (Photorhabdus luminescens subsp. laumondii).